The chain runs to 890 residues: Genome polyprotein 2 (890 aa).

The region spanning 135-255 (AFNFAHGYCY…NSDLLNGIVG (121 aa)) is the Peptidase C6 domain. Catalysis depends on for helper component proteinase activity residues Cys143 and His215. Residues 506-533 (FTTSGDDDSPPPPGDSPSRPPGRSPDRV) are disordered. The segment covering 515–528 (PPPPGDSPSRPPGR) has biased composition (pro residues). Positions 788–816 (ELVQRSMTKLDKEIELFQAQIDSQRRAVT) form a coiled coil.

Belongs to the bymoviruses polyprotein 2 family. The viral RNA2 of bymoviruses is expressed as a single polyprotein which undergoes post-translational proteolytic processing resulting in the production of at least two individual proteins. The HC-pro cleaves its C-terminus autocatalytically (Potential).

It carries out the reaction Hydrolyzes a Gly-|-Gly bond at its own C-terminus, commonly in the sequence -Tyr-Xaa-Val-Gly-|-Gly, in the processing of the potyviral polyprotein.. The protein is Genome polyprotein 2 of Hordeum vulgare (Barley).